We begin with the raw amino-acid sequence, 199 residues long: NAD(P)H dehydrogenase (quinone) (199 aa).

The 187-residue stretch at 4–190 (VLVLYYSAYG…DGARYQGRKI (187 aa)) folds into the Flavodoxin-like domain. FMN is bound by residues 10–15 (SAYGHI) and 78–80 (TRF). Residue Tyr12 participates in NAD(+) binding. Trp98 is a substrate binding site. Residues 113-119 (STATQHG) and His134 each bind FMN.

Belongs to the WrbA family. FMN is required as a cofactor.

It catalyses the reaction a quinone + NADH + H(+) = a quinol + NAD(+). The enzyme catalyses a quinone + NADPH + H(+) = a quinol + NADP(+). The protein is NAD(P)H dehydrogenase (quinone) of Xanthobacter autotrophicus (strain ATCC BAA-1158 / Py2).